The primary structure comprises 255 residues: uncharacterized protein (255 aa).

This is an uncharacterized protein from Bacillus subtilis (strain 168).